The following is a 335-amino-acid chain: Tetraacyldisaccharide 4'-kinase (335 aa).

58–65 (TVGGSGKT) is an ATP binding site.

The protein belongs to the LpxK family.

It catalyses the reaction a lipid A disaccharide + ATP = a lipid IVA + ADP + H(+). Its pathway is glycolipid biosynthesis; lipid IV(A) biosynthesis; lipid IV(A) from (3R)-3-hydroxytetradecanoyl-[acyl-carrier-protein] and UDP-N-acetyl-alpha-D-glucosamine: step 6/6. Functionally, transfers the gamma-phosphate of ATP to the 4'-position of a tetraacyldisaccharide 1-phosphate intermediate (termed DS-1-P) to form tetraacyldisaccharide 1,4'-bis-phosphate (lipid IVA). The chain is Tetraacyldisaccharide 4'-kinase from Shewanella sp. (strain MR-4).